We begin with the raw amino-acid sequence, 483 residues long: UDP-N-acetylmuramoyl-L-alanyl-D-glutamate--L-lysine ligase (483 aa).

Ser44 contacts UDP-N-acetyl-alpha-D-muramoyl-L-alanyl-D-glutamate. 120–126 (GTKGKTT) contributes to the ATP binding site. UDP-N-acetyl-alpha-D-muramoyl-L-alanyl-D-glutamate is bound by residues 162–163 (TT), Ser189, and Arg197. Lys231 is subject to N6-carboxylysine. An L-lysine recognition motif motif is present at residues 406–409 (DDPN).

Belongs to the MurCDEF family. MurE subfamily. Carboxylation is probably crucial for Mg(2+) binding and, consequently, for the gamma-phosphate positioning of ATP.

Its subcellular location is the cytoplasm. The enzyme catalyses UDP-N-acetyl-alpha-D-muramoyl-L-alanyl-D-glutamate + L-lysine + ATP = UDP-N-acetyl-alpha-D-muramoyl-L-alanyl-gamma-D-glutamyl-L-lysine + ADP + phosphate + H(+). It participates in cell wall biogenesis; peptidoglycan biosynthesis. Its function is as follows. Catalyzes the addition of L-lysine to the nucleotide precursor UDP-N-acetylmuramoyl-L-alanyl-D-glutamate (UMAG) in the biosynthesis of bacterial cell-wall peptidoglycan. The protein is UDP-N-acetylmuramoyl-L-alanyl-D-glutamate--L-lysine ligase of Streptococcus mutans serotype c (strain ATCC 700610 / UA159).